The primary structure comprises 296 residues: Ribosomal RNA small subunit methyltransferase A (296 aa).

Residues Asn-30, Leu-32, Gly-57, Glu-78, Asp-103, and Asn-128 each contribute to the S-adenosyl-L-methionine site.

Belongs to the class I-like SAM-binding methyltransferase superfamily. rRNA adenine N(6)-methyltransferase family. RsmA subfamily.

It localises to the cytoplasm. The catalysed reaction is adenosine(1518)/adenosine(1519) in 16S rRNA + 4 S-adenosyl-L-methionine = N(6)-dimethyladenosine(1518)/N(6)-dimethyladenosine(1519) in 16S rRNA + 4 S-adenosyl-L-homocysteine + 4 H(+). Specifically dimethylates two adjacent adenosines (A1518 and A1519) in the loop of a conserved hairpin near the 3'-end of 16S rRNA in the 30S particle. May play a critical role in biogenesis of 30S subunits. This is Ribosomal RNA small subunit methyltransferase A from Macrococcus caseolyticus (strain JCSC5402) (Macrococcoides caseolyticum).